Reading from the N-terminus, the 98-residue chain is ESAT-6-like protein EsxJ (98 aa).

This sequence belongs to the WXG100 family. CFP-10 subfamily.

It is found in the secreted. This Mycobacterium bovis (strain ATCC BAA-935 / AF2122/97) protein is ESAT-6-like protein EsxJ.